Consider the following 74-residue polypeptide: Translation initiation factor IF-1 (74 aa).

Residues 1-72 (MAKQDAIEME…TKGRITYRLR (72 aa)) enclose the S1-like domain.

Belongs to the IF-1 family. Component of the 30S ribosomal translation pre-initiation complex which assembles on the 30S ribosome in the order IF-2 and IF-3, IF-1 and N-formylmethionyl-tRNA(fMet); mRNA recruitment can occur at any time during PIC assembly.

Its subcellular location is the cytoplasm. Functionally, one of the essential components for the initiation of protein synthesis. Stabilizes the binding of IF-2 and IF-3 on the 30S subunit to which N-formylmethionyl-tRNA(fMet) subsequently binds. Helps modulate mRNA selection, yielding the 30S pre-initiation complex (PIC). Upon addition of the 50S ribosomal subunit IF-1, IF-2 and IF-3 are released leaving the mature 70S translation initiation complex. The chain is Translation initiation factor IF-1 from Acaryochloris marina (strain MBIC 11017).